Here is a 255-residue protein sequence, read N- to C-terminus: Phosphate import ATP-binding protein PstB (255 aa).

The 242-residue stretch at 9–250 (MYAQGLQFYY…PRNKQTEDYI (242 aa)) folds into the ABC transporter domain. 41-48 (GPSGCGKS) provides a ligand contact to ATP.

Belongs to the ABC transporter superfamily. Phosphate importer (TC 3.A.1.7) family. In terms of assembly, the complex is composed of two ATP-binding proteins (PstB), two transmembrane proteins (PstC and PstA) and a solute-binding protein (PstS).

The protein resides in the cell inner membrane. It catalyses the reaction phosphate(out) + ATP + H2O = ADP + 2 phosphate(in) + H(+). Part of the ABC transporter complex PstSACB involved in phosphate import. Responsible for energy coupling to the transport system. The chain is Phosphate import ATP-binding protein PstB from Nitratidesulfovibrio vulgaris (strain ATCC 29579 / DSM 644 / CCUG 34227 / NCIMB 8303 / VKM B-1760 / Hildenborough) (Desulfovibrio vulgaris).